The chain runs to 540 residues: Phosphoenolpyruvate carboxykinase (ATP) (540 aa).

Positions 67, 207, and 213 each coordinate substrate. ATP-binding positions include K213, H232, and 248–256 (GLSGTGKTT). Residues K213 and H232 each coordinate Mn(2+). D269 contributes to the Mn(2+) binding site. ATP-binding positions include E297, R333, 449 to 450 (RI), and T455. R333 contacts substrate.

It belongs to the phosphoenolpyruvate carboxykinase (ATP) family. In terms of assembly, monomer. Mn(2+) is required as a cofactor.

The protein resides in the cytoplasm. The catalysed reaction is oxaloacetate + ATP = phosphoenolpyruvate + ADP + CO2. The protein operates within carbohydrate biosynthesis; gluconeogenesis. Involved in the gluconeogenesis. Catalyzes the conversion of oxaloacetate (OAA) to phosphoenolpyruvate (PEP) through direct phosphoryl transfer between the nucleoside triphosphate and OAA. In Aliivibrio fischeri (strain MJ11) (Vibrio fischeri), this protein is Phosphoenolpyruvate carboxykinase (ATP).